The primary structure comprises 367 residues: Dual specificity protein phosphatase 1 (367 aa).

Residues 20 to 137 form the Rhodanese domain; the sequence is RAAQCLLLDC…FSASCPELCS (118 aa). The Tyrosine-protein phosphatase domain occupies 173–314; that stretch reads GPVEILPFLY…LLQFESQVLA (142 aa). The active-site Phosphocysteine intermediate is cysteine 258. A phosphoserine; by MAPK1 and MAPK3 mark is found at serine 359 and serine 364.

Belongs to the protein-tyrosine phosphatase family. Non-receptor class dual specificity subfamily. In terms of processing, phosphorylation at Ser-359 and Ser-364 by MAPK1/ERK2 and MAPK3/ERK1 reduces its rate of degradation. Post-translationally, 'Lys-48'-linked polyubiquitinated by NEURL3, leading to proteasomal degradation. As to expression, expressed at high levels in the lung, liver placenta and pancreas. Moderate levels seen in the heart and skeletal muscle. Lower levels found in the brain and kidney.

It localises to the nucleus. The enzyme catalyses O-phospho-L-tyrosyl-[protein] + H2O = L-tyrosyl-[protein] + phosphate. The catalysed reaction is O-phospho-L-seryl-[protein] + H2O = L-seryl-[protein] + phosphate. It carries out the reaction O-phospho-L-threonyl-[protein] + H2O = L-threonyl-[protein] + phosphate. Its function is as follows. Dual specificity phosphatase that dephosphorylates MAP kinase MAPK1/ERK2 on both 'Thr-183' and 'Tyr-185', regulating its activity during the meiotic cell cycle. This is Dual specificity protein phosphatase 1 from Homo sapiens (Human).